Consider the following 953-residue polypeptide: 26S proteasome non-ATPase regulatory subunit 1 (953 aa).

Residue methionine 1 is modified to N-acetylmethionine. Residue threonine 273 is modified to Phosphothreonine. The tract at residues 277-319 (SVPGSTNTGTVPGSEKDSDPMETEEKTASAVAGKTPDASPEPK) is disordered. A Phosphoserine modification is found at serine 290. Positions 290–303 (SEKDSDPMETEEKT) are enriched in basic and acidic residues. Lysine 310 is subject to N6-acetyllysine. At threonine 311 the chain carries Phosphothreonine. Phosphoserine is present on serine 315. PC repeat units follow at residues 403 to 436 (TATA…PGSA), 441 to 474 (GGLY…DIVR), 476 to 510 (GGSL…VTGE), 511 to 545 (AAGL…EKIL), 547 to 580 (GLAV…ILRR), 581 to 616 (SGMY…DVRR), 617 to 649 (AAVE…PHVR), 651 to 685 (GAAM…YVRQ), 686 to 726 (GALI…DVMA), and 729 to 761 (GAIL…PSVV). Lysine 720 bears the N6-acetyllysine mark. Position 830 is a phosphothreonine (threonine 830). Serine 834 carries the phosphoserine modification. Disordered stretches follow at residues 839 to 881 (AKKK…LDNP) and 930 to 953 (AHGP…YIDD). Basic and acidic residues-rich tracts occupy residues 842–852 (KEKEKEKKEEE) and 859–872 (AEKK…KEPE). Residues 936 to 953 (EEEEQEPEPPEPFEYIDD) show a composition bias toward acidic residues.

It belongs to the proteasome subunit S1 family. As to quaternary structure, component of the 19S proteasome regulatory particle complex. The 26S proteasome consists of a 20S core particle (CP) and two 19S regulatory subunits (RP). The regulatory particle is made of a lid composed of 9 subunits, a base containing 6 ATPases and few additional components including PSMD1. Interacts with ADRM1. Interacts with ZFAND1.

Functionally, component of the 26S proteasome, a multiprotein complex involved in the ATP-dependent degradation of ubiquitinated proteins. This complex plays a key role in the maintenance of protein homeostasis by removing misfolded or damaged proteins, which could impair cellular functions, and by removing proteins whose functions are no longer required. Therefore, the proteasome participates in numerous cellular processes, including cell cycle progression, apoptosis, or DNA damage repair. The sequence is that of 26S proteasome non-ATPase regulatory subunit 1 (Psmd1) from Mus musculus (Mouse).